Reading from the N-terminus, the 255-residue chain is Aliphatic sulfonates import ATP-binding protein SsuB (255 aa).

In terms of domain architecture, ABC transporter spans 12-233 (LLLNAVSKHY…RLGSVRLAEL (222 aa)). ATP is bound at residue 44–51 (GRSGGGKS).

Belongs to the ABC transporter superfamily. Aliphatic sulfonates importer (TC 3.A.1.17.2) family. As to quaternary structure, the complex is composed of two ATP-binding proteins (SsuB), two transmembrane proteins (SsuC) and a solute-binding protein (SsuA).

It localises to the cell inner membrane. The enzyme catalyses ATP + H2O + aliphatic sulfonate-[sulfonate-binding protein]Side 1 = ADP + phosphate + aliphatic sulfonateSide 2 + [sulfonate-binding protein]Side 1.. Its function is as follows. Part of the ABC transporter complex SsuABC involved in aliphatic sulfonates import. Responsible for energy coupling to the transport system. This Escherichia coli (strain K12) protein is Aliphatic sulfonates import ATP-binding protein SsuB.